The chain runs to 395 residues: NAD(P)H-quinone oxidoreductase subunit H, chloroplastic (395 aa).

Belongs to the complex I 49 kDa subunit family. As to quaternary structure, NDH is composed of at least 16 different subunits, 5 of which are encoded in the nucleus.

Its subcellular location is the plastid. The protein resides in the chloroplast thylakoid membrane. The catalysed reaction is a plastoquinone + NADH + (n+1) H(+)(in) = a plastoquinol + NAD(+) + n H(+)(out). It catalyses the reaction a plastoquinone + NADPH + (n+1) H(+)(in) = a plastoquinol + NADP(+) + n H(+)(out). NDH shuttles electrons from NAD(P)H:plastoquinone, via FMN and iron-sulfur (Fe-S) centers, to quinones in the photosynthetic chain and possibly in a chloroplast respiratory chain. The immediate electron acceptor for the enzyme in this species is believed to be plastoquinone. Couples the redox reaction to proton translocation, and thus conserves the redox energy in a proton gradient. This chain is NAD(P)H-quinone oxidoreductase subunit H, chloroplastic, found in Citrus sinensis (Sweet orange).